Here is a 195-residue protein sequence, read N- to C-terminus: Imidazoleglycerol-phosphate dehydratase (195 aa).

This sequence belongs to the imidazoleglycerol-phosphate dehydratase family.

It localises to the cytoplasm. It carries out the reaction D-erythro-1-(imidazol-4-yl)glycerol 3-phosphate = 3-(imidazol-4-yl)-2-oxopropyl phosphate + H2O. The protein operates within amino-acid biosynthesis; L-histidine biosynthesis; L-histidine from 5-phospho-alpha-D-ribose 1-diphosphate: step 6/9. The chain is Imidazoleglycerol-phosphate dehydratase from Bordetella petrii (strain ATCC BAA-461 / DSM 12804 / CCUG 43448).